The primary structure comprises 513 residues: Histidine ammonia-lyase (513 aa).

The segment at residues 146-148 (ASG) is a cross-link (5-imidazolinone (Ala-Gly)). S147 is subject to 2,3-didehydroalanine (Ser).

It belongs to the PAL/histidase family. In terms of processing, contains an active site 4-methylidene-imidazol-5-one (MIO), which is formed autocatalytically by cyclization and dehydration of residues Ala-Ser-Gly.

Its subcellular location is the cytoplasm. The enzyme catalyses L-histidine = trans-urocanate + NH4(+). The protein operates within amino-acid degradation; L-histidine degradation into L-glutamate; N-formimidoyl-L-glutamate from L-histidine: step 1/3. This chain is Histidine ammonia-lyase, found in Shewanella oneidensis (strain ATCC 700550 / JCM 31522 / CIP 106686 / LMG 19005 / NCIMB 14063 / MR-1).